The chain runs to 614 residues: Leucine-rich repeat and immunoglobulin-like domain-containing nogo receptor-interacting protein 1 (614 aa).

The signal sequence occupies residues 1-35 (MLAGGVRSMPSPLLACWQPILLLVLGSVLSGSATG). Disulfide bonds link Cys-36-Cys-42 and Cys-40-Cys-51. One can recognise an LRRNT domain in the interval 36-65 (CPPRCECSAQDRAVLCHRKRFVAVPEGIPT). Topologically, residues 36 to 555 (CPPRCECSAQ…FDIKTLIIAT (520 aa)) are extracellular. 11 LRR repeats span residues 66–87 (ETRLLDLGKNRIKTLNQDEFAS), 90–111 (HLEELELNENIVSAVEPGAFNN), 114–135 (NLRTLGLRSNRLKLIPLGVFTG), 138–159 (NLTKLDISENKIVILLDYMFQD), 162–183 (NLKSLEVGDNDLVYISHRAFSG), 186–207 (SLEQLTLEKCNLTSIPTEALSH), 210–231 (GLIVLRLRHLNINAIRDYSFKR), 258–279 (NLTSLSITHCNLTAVPYLAVRH), 282–303 (YLRFLNLSYNPISTIEGSMLHE), 306–327 (RLQEIQLVGGQLAMVEPYAFRG), and 330–351 (YLRVLNVSGNQLTTLEESVFHS). A glycan (N-linked (GlcNAc...) asparagine) is linked at Asn-138. A glycan (N-linked (GlcNAc...) asparagine) is linked at Asn-196. 3 N-linked (GlcNAc...) asparagine glycosylation sites follow: Asn-258, Asn-268, and Asn-287. Asn-335 carries N-linked (GlcNAc...) asparagine glycosylation. An LRRCT domain is found at 363 to 417 (NPLACDCRLLWVFRRRWRLNFNRQQPTCATPEFVQGKEFKDFPDVLLPNYFTCRR). Intrachain disulfides connect Cys-367–Cys-390, Cys-369–Cys-415, and Cys-440–Cys-491. An Ig-like C2-type domain is found at 405 to 507 (PDVLLPNYFT…GNDSMPAHLH (103 aa)). Residues Asn-486 and Asn-536 are each glycosylated (N-linked (GlcNAc...) asparagine). The chain crosses the membrane as a helical span at residues 556-576 (TMGFISFLGVVLFCLVLLFLW). Residues 577–614 (SRGKGNTKHNIEIEYVPRKSDAGISSADAPRKFNMKMI) are Cytoplasmic-facing. A Phosphoserine modification is found at Ser-596.

In terms of assembly, homotetramer. Forms a ternary complex with RTN4R/NGFR and RTN4R/TNFRSF19. Interacts with NGRF, RTN4R and MYT1L. Post-translationally, N-glycosylated. Contains predominantly high-mannose glycans.

It localises to the cell membrane. In terms of biological role, functional component of the Nogo receptor signaling complex (RTN4R/NGFR) in RhoA activation responsible for some inhibition of axonal regeneration by myelin-associated factors. Is also an important negative regulator of oligodentrocyte differentiation and axonal myelination. Acts in conjunction with RTN4 and RTN4R in regulating neuronal precursor cell motility during cortical development. In Macaca fascicularis (Crab-eating macaque), this protein is Leucine-rich repeat and immunoglobulin-like domain-containing nogo receptor-interacting protein 1 (LINGO1).